The primary structure comprises 224 residues: UPF0173 metal-dependent hydrolase EAT1b_0495 (224 aa).

It belongs to the UPF0173 family.

The polypeptide is UPF0173 metal-dependent hydrolase EAT1b_0495 (Exiguobacterium sp. (strain ATCC BAA-1283 / AT1b)).